The sequence spans 155 residues: SsrA-binding protein (155 aa).

Over residues Thr135–Lys147 the composition is skewed to basic and acidic residues. Residues Thr135–Arg155 are disordered.

The protein belongs to the SmpB family.

The protein resides in the cytoplasm. Its function is as follows. Required for rescue of stalled ribosomes mediated by trans-translation. Binds to transfer-messenger RNA (tmRNA), required for stable association of tmRNA with ribosomes. tmRNA and SmpB together mimic tRNA shape, replacing the anticodon stem-loop with SmpB. tmRNA is encoded by the ssrA gene; the 2 termini fold to resemble tRNA(Ala) and it encodes a 'tag peptide', a short internal open reading frame. During trans-translation Ala-aminoacylated tmRNA acts like a tRNA, entering the A-site of stalled ribosomes, displacing the stalled mRNA. The ribosome then switches to translate the ORF on the tmRNA; the nascent peptide is terminated with the 'tag peptide' encoded by the tmRNA and targeted for degradation. The ribosome is freed to recommence translation, which seems to be the essential function of trans-translation. In Streptococcus pyogenes serotype M12 (strain MGAS2096), this protein is SsrA-binding protein.